A 305-amino-acid chain; its full sequence is Lipoyl synthase (305 aa).

Positions 41, 46, 52, 68, 72, 75, and 281 each coordinate [4Fe-4S] cluster. In terms of domain architecture, Radical SAM core spans 54–270 (GARRTATFMI…RKVAMDKGFK (217 aa)). The span at 283–298 (HADEQVNEAAKEKQRQ) shows a compositional bias: basic and acidic residues. A disordered region spans residues 283–305 (HADEQVNEAAKEKQRQGEAQLNS).

The protein belongs to the radical SAM superfamily. Lipoyl synthase family. It depends on [4Fe-4S] cluster as a cofactor.

The protein resides in the cytoplasm. It catalyses the reaction [[Fe-S] cluster scaffold protein carrying a second [4Fe-4S](2+) cluster] + N(6)-octanoyl-L-lysyl-[protein] + 2 oxidized [2Fe-2S]-[ferredoxin] + 2 S-adenosyl-L-methionine + 4 H(+) = [[Fe-S] cluster scaffold protein] + N(6)-[(R)-dihydrolipoyl]-L-lysyl-[protein] + 4 Fe(3+) + 2 hydrogen sulfide + 2 5'-deoxyadenosine + 2 L-methionine + 2 reduced [2Fe-2S]-[ferredoxin]. It participates in protein modification; protein lipoylation via endogenous pathway; protein N(6)-(lipoyl)lysine from octanoyl-[acyl-carrier-protein]. Functionally, catalyzes the radical-mediated insertion of two sulfur atoms into the C-6 and C-8 positions of the octanoyl moiety bound to the lipoyl domains of lipoate-dependent enzymes, thereby converting the octanoylated domains into lipoylated derivatives. The chain is Lipoyl synthase from Staphylococcus aureus (strain Mu3 / ATCC 700698).